The following is a 301-amino-acid chain: Putative dynamin-related protein 4A (301 aa).

The Dynamin-type G domain maps to 59 to 301 (GIQLPTIVVV…LIDGDIVGIL (243 aa)). Residues 69–76 (GDQSSGKS) are G1 motif. 69–76 (GDQSSGKS) provides a ligand contact to GTP. Residues 94–96 (CTR) are G2 motif. Residues 168–171 (DLPG) are G3 motif. Residues 168–172 (DLPGI) and 237–240 (TKAD) each bind GTP. Residues 237–240 (TKAD) are G4 motif. A region of interest (G5 motif) is located at residue Glu270.

The protein belongs to the TRAFAC class dynamin-like GTPase superfamily. Dynamin/Fzo/YdjA family.

This chain is Putative dynamin-related protein 4A (DRP4A), found in Arabidopsis thaliana (Mouse-ear cress).